A 450-amino-acid polypeptide reads, in one-letter code: MPHNSIRSGHGGLNQLGGAFVNGRPLPEVVRQRIVDLAHQGVRPCDISRQLRVSHGCVSKILGRYYETGSIRPGVIGGSKPKVATPKVVEKIGDYKRQNPTMFAWEIRDRLLAEGVCDNDTVPSVSSINRIIRTKVQQPFNLPMDSCVATKSLSPGHTLIPSSAVTPPESPQSDSLGSTYSINGLLGIAQPGSDKRKMDDSDQDSCRLSIDSQSSSSGPRKHLRTDAFSQHHLEPLECPFERQHYPEAYASPSHTKGEQGLYPLPLLNSTLDDGKATLTPSNTPLGRNLSTHQTYPVVADPHSPFAIKQETPEVSSSSSTPSSLSSSAFLDLQQVGSGVPPFNAFPHAASVYGQFTGQALLSGREMVGPTLPGYPPHIPTSGQGSYASSAIAGMVAGSEYSGNAYGHTPYSSYSEAWRFPNSSLLSSPYYYSSTSRPSAPPTTATAFDHL.

A DNA-binding region (paired) is located at residues 9–135; it reads GHGGLNQLGG…SSINRIIRTK (127 aa). Positions 12–68 are PAI subdomain; it reads GLNQLGGAFVNGRPLPEVVRQRIVDLAHQGVRPCDISRQLRVSHGCVSKILGRYYET. The interval 87–135 is RED subdomain; that stretch reads KVVEKIGDYKRQNPTMFAWEIRDRLLAEGVCDNDTVPSVSSINRIIRTK. The segment covering 159 to 182 has biased composition (polar residues); it reads LIPSSAVTPPESPQSDSLGSTYSI. The interval 159-222 is disordered; that stretch reads LIPSSAVTPP…QSSSSGPRKH (64 aa). Serine 303 bears the Phosphoserine mark.

In terms of assembly, interacts with WWTR1. As to expression, expressed in the excretory system, thyroid gland and Wilms tumors.

It is found in the nucleus. In terms of biological role, transcription factor for the thyroid-specific expression of the genes exclusively expressed in the thyroid cell type, maintaining the functional differentiation of such cells. This chain is Paired box protein Pax-8 (PAX8), found in Homo sapiens (Human).